A 715-amino-acid chain; its full sequence is Ribosomal RNA large subunit methyltransferase K/L (715 aa).

A THUMP domain is found at 43 to 154; the sequence is TQYRALLWSR…RDDLVLSLDL (112 aa).

Belongs to the methyltransferase superfamily. RlmKL family.

It localises to the cytoplasm. The catalysed reaction is guanosine(2445) in 23S rRNA + S-adenosyl-L-methionine = N(2)-methylguanosine(2445) in 23S rRNA + S-adenosyl-L-homocysteine + H(+). It catalyses the reaction guanosine(2069) in 23S rRNA + S-adenosyl-L-methionine = N(2)-methylguanosine(2069) in 23S rRNA + S-adenosyl-L-homocysteine + H(+). Its function is as follows. Specifically methylates the guanine in position 2445 (m2G2445) and the guanine in position 2069 (m7G2069) of 23S rRNA. This Mannheimia succiniciproducens (strain KCTC 0769BP / MBEL55E) protein is Ribosomal RNA large subunit methyltransferase K/L.